The sequence spans 326 residues: Ras association domain-containing protein 2 (326 aa).

A disordered region spans residues 111-133 (EVDAPPEGDQMPSSTDSRGLKPL). In terms of domain architecture, Ras-associating spans 176 to 264 (YNHKTSVFTP…SKVFLMEKDQ (89 aa)). The SARAH domain maps to 272–319 (VAQYIKFEMPVLKSFIQKLQEEEDREVKKLMRKYTVLRLMIRQRLEEI).

Interacts directly with activated KRAS in a GTP-dependent manner. Interacts (via SARAH domain) with STK3/MST2 and STK4/MST1. In terms of processing, phosphorylated by STK3/MST2 and STK4/MST1. As to expression, widely expressed with highest levels in brain, placenta, peripheral blood and lung. Frequently down-regulated in lung tumor cell lines.

It is found in the nucleus. It localises to the cytoplasm. The protein localises to the chromosome. Its subcellular location is the centromere. The protein resides in the kinetochore. Functionally, potential tumor suppressor. Acts as a KRAS-specific effector protein. May promote apoptosis and cell cycle arrest. Stabilizes STK3/MST2 by protecting it from proteasomal degradation. The polypeptide is Ras association domain-containing protein 2 (RASSF2) (Homo sapiens (Human)).